The chain runs to 346 residues: tRNA N6-adenosine threonylcarbamoyltransferase (346 aa).

Fe cation contacts are provided by His111 and His115. Substrate is bound by residues 134 to 138 (LVSGG), Asp167, Gly180, and Asn279. Asp307 lines the Fe cation pocket.

This sequence belongs to the KAE1 / TsaD family. Requires Fe(2+) as cofactor.

The protein resides in the cytoplasm. The catalysed reaction is L-threonylcarbamoyladenylate + adenosine(37) in tRNA = N(6)-L-threonylcarbamoyladenosine(37) in tRNA + AMP + H(+). In terms of biological role, required for the formation of a threonylcarbamoyl group on adenosine at position 37 (t(6)A37) in tRNAs that read codons beginning with adenine. Is involved in the transfer of the threonylcarbamoyl moiety of threonylcarbamoyl-AMP (TC-AMP) to the N6 group of A37, together with TsaE and TsaB. TsaD likely plays a direct catalytic role in this reaction. This Burkholderia cenocepacia (strain ATCC BAA-245 / DSM 16553 / LMG 16656 / NCTC 13227 / J2315 / CF5610) (Burkholderia cepacia (strain J2315)) protein is tRNA N6-adenosine threonylcarbamoyltransferase.